The sequence spans 436 residues: UPF0597 protein YhaM (436 aa).

The protein belongs to the UPF0597 family.

This is UPF0597 protein YhaM from Shigella flexneri serotype 5b (strain 8401).